The primary structure comprises 1013 residues: Zinc finger and BTB domain-containing protein 4 (1013 aa).

Residues 30 to 152 (CDVTLIAGDT…IYSARLALPG (123 aa)) form the BTB domain. A Glycyl lysine isopeptide (Lys-Gly) (interchain with G-Cter in SUMO2) cross-link involves residue lysine 40. The segment covering 67-110 (LPPATGGAAPNPATTTAASSSSSSSSSSSSSSSSASSSSSSSSS) has biased composition (low complexity). Disordered regions lie at residues 67–124 (LPPA…SPPR) and 183–221 (DAWV…AEAQ). Pro residues predominate over residues 111–121 (SPPPASPPASS). Positions 186-348 (VPPTPAPMAT…CRYCEKVFAL (163 aa)) are interaction with CBFA2T3. The segment at 234–256 (LPCPQCGKSFIHPKRLQTHEAQC) adopts a C2H2-type 1; atypical zinc-finger fold. A disordered region spans residues 257–281 (RRGASTRGSTGLGAGGAGPGGPAGV). The span at 266–279 (TGLGAGGAGPGGPA) shows a compositional bias: gly residues. C2H2-type zinc fingers lie at residues 309–331 (YVCA…SNVH), 337–359 (YPCR…EVWH), and 365–388 (YQCI…RAFH). Position 391 is a phosphoserine (serine 391). Disordered stretches follow at residues 428–765 (KTYS…STRF), 783–852 (HGQR…DPII), 883–904 (GREP…AGEG), and 972–1013 (VNPQ…GDVG). A compositionally biased stretch (pro residues) spans 453–470 (ASPPPGPPPAPEPGPPPS). Composition is skewed to low complexity over residues 496-506 (TASTGGSQAAS) and 531-554 (ATPT…ATTT). Residue lysine 573 forms a Glycyl lysine isopeptide (Lys-Gly) (interchain with G-Cter in SUMO2) linkage. Residues 576-590 (GGIGGGGGPPTGAGR) are compositionally biased toward gly residues. A compositionally biased stretch (basic and acidic residues) spans 608-625 (IGEEAIVKRRISETDLRP). Lysine 615 participates in a covalent cross-link: Glycyl lysine isopeptide (Lys-Gly) (interchain with G-Cter in SUMO2). Residues 627-663 (ELSGEEMEESEEDEEEEDEEEEEEDEEESKAGGEDQL) are a coiled coil. Residues 629 to 654 (SGEEMEESEEDEEEEDEEEEEEDEEE) are compositionally biased toward acidic residues. The span at 678–689 (AAGGASVGGSGL) shows a compositional bias: gly residues. C2H2-type zinc fingers lie at residues 726 to 748 (HRCG…QEAH) and 765 to 787 (FTCP…GQRH). Residues threonine 795 and threonine 797 each carry the phosphothreonine; by HIPK2 modification. Over residues 836–846 (TAAEEASETAS) the composition is skewed to low complexity. Gly residues predominate over residues 883–902 (GREPGGGRGKSGSEGPVGAG). Over residues 976–995 (AAPPAPPTPPPPTLPPPIPP) the composition is skewed to pro residues. Position 983 is a phosphothreonine; by HIPK2 (threonine 983). The span at 997–1013 (GEGERAGVERTQKGDVG) shows a compositional bias: basic and acidic residues.

In terms of assembly, interacts with HIPK2. Interacts with CBFA2T3. Interacts with ZBTB38. In terms of processing, phosphorylated by HIPK2. This phosphorylation reduces stability and triggers ZBTB4 protein degradation in response to DNA damage.

It localises to the nucleus. Its subcellular location is the chromosome. Transcriptional repressor with bimodal DNA-binding specificity. Represses transcription in a methyl-CpG-dependent manner. Binds with a higher affinity to methylated CpG dinucleotides in the consensus sequence 5'-CGCG-3' but can also bind to the non-methylated consensus sequence 5'-CTGCNA-3' also known as the consensus kaiso binding site (KBS). Can also bind specifically to a single methyl-CpG pair and can bind hemimethylated DNA but with a lower affinity compared to methylated DNA. Plays a role in postnatal myogenesis, may be involved in the regulation of satellite cells self-renewal. In Homo sapiens (Human), this protein is Zinc finger and BTB domain-containing protein 4 (ZBTB4).